Consider the following 732-residue polypeptide: Ubiquitin carboxyl-terminal hydrolase 21 (732 aa).

Residues 1 to 10 show a composition bias toward pro residues; that stretch reads MAEFSDPPPS. The disordered stretch occupies residues 1–111; the sequence is MAEFSDPPPS…ISPVSNNNHL (111 aa). 2 stretches are compositionally biased toward polar residues: residues 11–31 and 38–53; these read NLSS…SSPT and VTNS…QIQA. A compositionally biased stretch (low complexity) spans 55-69; sequence SPAKPDGSSSSPPDK. The region spanning 163–469 is the USP domain; it reads AGLYNSGNTC…PAYILFYARE (307 aa). Cys172 (nucleophile) is an active-site residue. The active-site Proton acceptor is His428. The tract at residues 534–732 is disordered; the sequence is KEEVFHSAES…SSNMRRSIKL (199 aa). Over residues 540–551 the composition is skewed to low complexity; sequence SAESSNNEDSSA. The segment covering 583 to 609 has biased composition (basic and acidic residues); sequence AYIDKSEKPFAETSQPKEPKPFADRAS. Positions 719-732 are enriched in basic residues; it reads KKKKSSNMRRSIKL.

It belongs to the peptidase C19 family.

The catalysed reaction is Thiol-dependent hydrolysis of ester, thioester, amide, peptide and isopeptide bonds formed by the C-terminal Gly of ubiquitin (a 76-residue protein attached to proteins as an intracellular targeting signal).. Its function is as follows. Recognizes and hydrolyzes the peptide bond at the C-terminal Gly of ubiquitin. Involved in the processing of poly-ubiquitin precursors as well as that of ubiquitinated proteins. The polypeptide is Ubiquitin carboxyl-terminal hydrolase 21 (UBP21) (Arabidopsis thaliana (Mouse-ear cress)).